Reading from the N-terminus, the 414-residue chain is Light-independent protochlorophyllide reductase subunit N (414 aa).

[4Fe-4S] cluster is bound by residues cysteine 16, cysteine 41, and cysteine 98.

The protein belongs to the BchN/ChlN family. In terms of assembly, protochlorophyllide reductase is composed of three subunits; BchL, BchN and BchB. Forms a heterotetramer of two BchB and two BchN subunits. The cofactor is [4Fe-4S] cluster.

The catalysed reaction is chlorophyllide a + oxidized 2[4Fe-4S]-[ferredoxin] + 2 ADP + 2 phosphate = protochlorophyllide a + reduced 2[4Fe-4S]-[ferredoxin] + 2 ATP + 2 H2O. Its pathway is porphyrin-containing compound metabolism; bacteriochlorophyll biosynthesis (light-independent). Functionally, component of the dark-operative protochlorophyllide reductase (DPOR) that uses Mg-ATP and reduced ferredoxin to reduce ring D of protochlorophyllide (Pchlide) to form chlorophyllide a (Chlide). This reaction is light-independent. The NB-protein (BchN-BchB) is the catalytic component of the complex. The chain is Light-independent protochlorophyllide reductase subunit N from Roseiflexus castenholzii (strain DSM 13941 / HLO8).